A 312-amino-acid polypeptide reads, in one-letter code: Olfactory receptor 10D3 (312 aa).

Topologically, residues 1-26 (MEIKNCSVVTEFILLGIPHTEGFETL) are extracellular. A glycan (N-linked (GlcNAc...) asparagine) is linked at Asn5. Residues 27–47 (LFVLFLPFYACTLVGNVSILV) traverse the membrane as a helical segment. Topologically, residues 48 to 57 (AVISSTRLHT) are cytoplasmic. A helical transmembrane segment spans residues 58 to 78 (PMYFFLGNLSVFDMGFSSVTC). Residues 79-97 (PKMLFYLMGLSRLISYQDC) lie on the Extracellular side of the membrane. An intrachain disulfide couples Cys97 to Cys179. Residues 98 to 118 (VSQLFFFHFLGSIECFLYTVM) form a helical membrane-spanning segment. Residues 119–139 (AYDRFAAICHPLRYSVIMNSK) lie on the Cytoplasmic side of the membrane. A helical transmembrane segment spans residues 140-160 (ICVALAVGTWLLGCFHSSVLT). Residues 161–197 (SLTFTLPYCGPNEVDHFFCDIPAILPLASADTSLAQR) lie on the Extracellular side of the membrane. The helical transmembrane segment at 198 to 218 (VSFTNVGLVSLVCFLLILLSY) threads the bilayer. At 219 to 239 (TRITISILSIQSTEGRQRAFS) the chain is on the cytoplasmic side. The helical transmembrane segment at 240–260 (TCSAHLIAILCAYGPIITIYL) threads the bilayer. Residues 261 to 266 (QPTPNP) lie on the Extracellular side of the membrane. A helical membrane pass occupies residues 267–287 (MLGTVVQILMNLVGPMLNPLI). Topologically, residues 288 to 312 (YTLRNKEVKIALKKILHGKGSVSEG) are cytoplasmic.

The protein belongs to the G-protein coupled receptor 1 family.

Its subcellular location is the cell membrane. Functionally, potential odorant receptor. The chain is Olfactory receptor 10D3 from Mus musculus (Mouse).